The following is a 564-amino-acid chain: Keratin, type II cytoskeletal 6C (564 aa).

Residues 1–11 show a composition bias toward low complexity; sequence MASTSTTIRSH. The interval 1–23 is disordered; the sequence is MASTSTTIRSHSSSRRGFSANSA. Ala-2 is modified (N-acetylalanine). The interval 2-162 is head; sequence ASTSTTIRSH…DPAIQRVRAE (161 aa). The residue at position 60 (Ser-60) is a Phosphoserine. A coil 1A region spans residues 163–198; that stretch reads EREQIKTLNNKFASFIDKVRFLEQQNKVLDTKWTLL. In terms of domain architecture, IF rod spans 163-476; the sequence is EREQIKTLNN…KLLEGEECRL (314 aa). The segment at 199–217 is linker 1; that stretch reads QEQGTKTVRQNLEPLFEQY. A coil 1B region spans residues 218–309; sequence INNLRRQLDS…ALYDAELSQM (92 aa). The interval 310-333 is linker 12; sequence QTHISDTSVVLSMDNNRNLDLDSI. Residues 334–472 form a coil 2 region; sequence IAEVKAQYEE…ATYRKLLEGE (139 aa). The interval 473-564 is tail; it reads ECRLNGEGVG…SSSSRKSYKH (92 aa).

It belongs to the intermediate filament family. As to quaternary structure, heterodimer of a type I and a type II keratin. KRT6 isomers associate with KRT16 and/or KRT17. Constitutively expressed in distinct types of epithelia such as those in oral mucosa, esophagus, papillae of tongue and hair follicle outer root sheath.

In Homo sapiens (Human), this protein is Keratin, type II cytoskeletal 6C (KRT6C).